The sequence spans 310 residues: MAMAERPRPGWASYQNPNINNCQDMGNSILLLLGLIVCINIGINLVTLLWSRIRILLHRMFHIICEKETSTSLGKLVQPLRKQTYPKVHLRCTMDPVKMTVTPPPTRRRYRHRAPPSRRARCPIAWAPDTDDEKPPHQHPAICSRHWNDSKDWEGFQSMQEVWEPWTQDGLEQPPQTIRFQPAVEARPLKSEIRSDQGLEAYVYTVNPPPPSPEALSHKNNAAGSGGCVEGEQAQGQPVSPSFLGPANVPEIPRRHSSGRIVYDARDVRRRLRELTQEVEALSHCYPLVSGSSAAEGTGKDWVYRPLKGR.

The helical transmembrane segment at 29 to 49 (ILLLLGLIVCINIGINLVTLL) threads the bilayer. The segment at 215–238 (ALSHKNNAAGSGGCVEGEQAQGQP) is disordered. A coiled-coil region spans residues 262-286 (VYDARDVRRRLRELTQEVEALSHCY).

Testis-specific. Exclusively present in cytoplasm of steps 14-16 elongated spermatids (at protein level).

It is found in the membrane. The protein localises to the cytoplasm. Its function is as follows. Required for proper cytoplasm removal during spermatogenesis. The polypeptide is Spermatid maturation protein 1 (Spem1) (Mus musculus (Mouse)).